Reading from the N-terminus, the 75-residue chain is UPF0352 protein plu2871 (75 aa).

Belongs to the UPF0352 family.

The chain is UPF0352 protein plu2871 from Photorhabdus laumondii subsp. laumondii (strain DSM 15139 / CIP 105565 / TT01) (Photorhabdus luminescens subsp. laumondii).